A 489-amino-acid chain; its full sequence is Ketol-acid reductoisomerase (NADP(+)) (489 aa).

Residues 16–207 (IKKCRFMEKK…GGHRAGVLES (192 aa)) enclose the KARI N-terminal Rossmann domain. Residues 44–47 (CGSQ), arginine 67, serine 77, and 107–109 (DKQ) each bind NADP(+). The active site involves histidine 131. An NADP(+)-binding site is contributed by glycine 157. KARI C-terminal knotted domains lie at 208–343 (SFVA…QSPD) and 344–483 (YDKK…MKNM). Mg(2+)-binding residues include aspartate 216, glutamate 220, glutamate 388, and glutamate 392. Serine 413 provides a ligand contact to substrate.

This sequence belongs to the ketol-acid reductoisomerase family. Mg(2+) serves as cofactor.

The catalysed reaction is (2R)-2,3-dihydroxy-3-methylbutanoate + NADP(+) = (2S)-2-acetolactate + NADPH + H(+). It catalyses the reaction (2R,3R)-2,3-dihydroxy-3-methylpentanoate + NADP(+) = (S)-2-ethyl-2-hydroxy-3-oxobutanoate + NADPH + H(+). The protein operates within amino-acid biosynthesis; L-isoleucine biosynthesis; L-isoleucine from 2-oxobutanoate: step 2/4. It functions in the pathway amino-acid biosynthesis; L-valine biosynthesis; L-valine from pyruvate: step 2/4. In terms of biological role, involved in the biosynthesis of branched-chain amino acids (BCAA). Catalyzes an alkyl-migration followed by a ketol-acid reduction of (S)-2-acetolactate (S2AL) to yield (R)-2,3-dihydroxy-isovalerate. In the isomerase reaction, S2AL is rearranged via a Mg-dependent methyl migration to produce 3-hydroxy-3-methyl-2-ketobutyrate (HMKB). In the reductase reaction, this 2-ketoacid undergoes a metal-dependent reduction by NADPH to yield (R)-2,3-dihydroxy-isovalerate. This Buchnera aphidicola subsp. Diuraphis noxia protein is Ketol-acid reductoisomerase (NADP(+)).